An 897-amino-acid polypeptide reads, in one-letter code: Translation initiation factor IF-2 (897 aa).

Residues 402 to 570 (NRAPIVTIMG…SILVQSEILE (169 aa)) form the tr-type G domain. The G1 stretch occupies residues 411 to 418 (GHVDHGKT). A GTP-binding site is contributed by 411-418 (GHVDHGKT). Positions 436 to 440 (GITQN) are G2. The interval 458 to 461 (DTPG) is G3. Residues 458 to 462 (DTPGH) and 512 to 515 (NKID) each bind GTP. The segment at 512-515 (NKID) is G4. The tract at residues 548 to 550 (SAV) is G5.

The protein belongs to the TRAFAC class translation factor GTPase superfamily. Classic translation factor GTPase family. IF-2 subfamily.

Its subcellular location is the cytoplasm. Its function is as follows. One of the essential components for the initiation of protein synthesis. Protects formylmethionyl-tRNA from spontaneous hydrolysis and promotes its binding to the 30S ribosomal subunits. Also involved in the hydrolysis of GTP during the formation of the 70S ribosomal complex. The sequence is that of Translation initiation factor IF-2 from Blochmanniella floridana.